A 233-amino-acid polypeptide reads, in one-letter code: 5'-methylthioadenosine/S-adenosylhomocysteine nucleosidase (233 aa).

Glu12 functions as the Proton acceptor in the catalytic mechanism. Substrate contacts are provided by residues Gly78, Ile156, and 177–178 (ME). The Proton donor role is filled by Asp201.

The protein belongs to the PNP/UDP phosphorylase family. MtnN subfamily.

It catalyses the reaction S-adenosyl-L-homocysteine + H2O = S-(5-deoxy-D-ribos-5-yl)-L-homocysteine + adenine. It carries out the reaction S-methyl-5'-thioadenosine + H2O = 5-(methylsulfanyl)-D-ribose + adenine. The enzyme catalyses 5'-deoxyadenosine + H2O = 5-deoxy-D-ribose + adenine. It participates in amino-acid biosynthesis; L-methionine biosynthesis via salvage pathway; S-methyl-5-thio-alpha-D-ribose 1-phosphate from S-methyl-5'-thioadenosine (hydrolase route): step 1/2. In terms of biological role, catalyzes the irreversible cleavage of the glycosidic bond in both 5'-methylthioadenosine (MTA) and S-adenosylhomocysteine (SAH/AdoHcy) to adenine and the corresponding thioribose, 5'-methylthioribose and S-ribosylhomocysteine, respectively. Also cleaves 5'-deoxyadenosine, a toxic by-product of radical S-adenosylmethionine (SAM) enzymes, into 5-deoxyribose and adenine. The sequence is that of 5'-methylthioadenosine/S-adenosylhomocysteine nucleosidase from Listeria welshimeri serovar 6b (strain ATCC 35897 / DSM 20650 / CCUG 15529 / CIP 8149 / NCTC 11857 / SLCC 5334 / V8).